The primary structure comprises 274 residues: Ribosomal RNA small subunit methyltransferase A (274 aa).

S-adenosyl-L-methionine is bound by residues His-15, Leu-17, Gly-42, Glu-64, Asp-89, and Asn-109.

Belongs to the class I-like SAM-binding methyltransferase superfamily. rRNA adenine N(6)-methyltransferase family. RsmA subfamily.

The protein resides in the cytoplasm. It catalyses the reaction adenosine(1518)/adenosine(1519) in 16S rRNA + 4 S-adenosyl-L-methionine = N(6)-dimethyladenosine(1518)/N(6)-dimethyladenosine(1519) in 16S rRNA + 4 S-adenosyl-L-homocysteine + 4 H(+). Its function is as follows. Specifically dimethylates two adjacent adenosines (A1518 and A1519) in the loop of a conserved hairpin near the 3'-end of 16S rRNA in the 30S particle. May play a critical role in biogenesis of 30S subunits. The protein is Ribosomal RNA small subunit methyltransferase A of Synechococcus sp. (strain CC9605).